The following is a 453-amino-acid chain: Homogentisate 1,2-dioxygenase (453 aa).

A disordered region spans residues 1–42 (MLEKAEKQRRAGSGQQRAAGYMPGFGNDFETESLPGALPQGQ). His306 (proton acceptor) is an active-site residue. 2 residues coordinate Fe cation: His349 and Glu355. Positions 364 and 385 each coordinate homogentisate. Fe cation is bound at residue His385.

Belongs to the homogentisate dioxygenase family. In terms of assembly, hexamer; dimer of trimers. Requires Fe cation as cofactor.

It catalyses the reaction homogentisate + O2 = 4-maleylacetoacetate + H(+). The protein operates within amino-acid degradation; L-phenylalanine degradation; acetoacetate and fumarate from L-phenylalanine: step 4/6. In terms of biological role, involved in the catabolism of homogentisate (2,5-dihydroxyphenylacetate or 2,5-OH-PhAc), a central intermediate in the degradation of phenylalanine and tyrosine. Catalyzes the oxidative ring cleavage of the aromatic ring of homogentisate to yield maleylacetoacetate. This is Homogentisate 1,2-dioxygenase from Rhizobium meliloti (strain 1021) (Ensifer meliloti).